We begin with the raw amino-acid sequence, 251 residues long: tRNA (guanine-N(7)-)-methyltransferase (251 aa).

Residues Glu-80, Glu-105, Asp-132, and Asp-155 each coordinate S-adenosyl-L-methionine. The active site involves Asp-155. Substrate is bound by residues Lys-159, Asp-191, and 228 to 231 (TKFE).

Belongs to the class I-like SAM-binding methyltransferase superfamily. TrmB family.

The catalysed reaction is guanosine(46) in tRNA + S-adenosyl-L-methionine = N(7)-methylguanosine(46) in tRNA + S-adenosyl-L-homocysteine. It functions in the pathway tRNA modification; N(7)-methylguanine-tRNA biosynthesis. In terms of biological role, catalyzes the formation of N(7)-methylguanine at position 46 (m7G46) in tRNA. This is tRNA (guanine-N(7)-)-methyltransferase from Histophilus somni (strain 2336) (Haemophilus somnus).